The sequence spans 447 residues: MAATPLPPPRRPVFSRGSWAETRRVTEILRKETVGGVILLVAAAAALIWANSPWAEGYFALRDLELGGEWFGLHLNLTLGAWAADGLLAIFFLVVGLELKREFVAGDLRDPSRAALPIAAAVGGMVVPALIFVLVNLNTGDGALRGWAIPTATDIAFAVAVLAVIGTHLPSALRTFLLTLAVVDDLLAITVIAVFYTEDINGLALALAAVPLALFALCVQRGVQKWWVLVPLSVATWVLMHESGVHATVAGVLLGFAVPVRRQATPRGRGPAPSQRVGMAEYFEHRVRPVSAGIAIPVFAFFAAGVSIGGLDGFTRALSDPITLGIVLGLVLGKPIGIVLTTRVLSAVTRANLDASLRWVDVVGMSMLAGIGFTVSLLIGDLAYGLGSERDEFVKIGVLFGSLLAAGVAAVVLLTRNRAYRRIYREETVDEDRDGVPDVYQTRQDRT.

A run of 10 helical transmembrane segments spans residues 34 to 54 (VGGV…NSPW), 77 to 97 (LTLG…VVGL), 115 to 135 (ALPI…FVLV), 146 to 166 (GWAI…AVIG), 176 to 196 (FLLT…AVFY), 200 to 220 (INGL…LCVQ), 290 to 310 (VSAG…SIGG), 321 to 341 (PITL…IVLT), 359 to 379 (WVDV…SLLI), and 393 to 413 (FVKI…AVVL).

This sequence belongs to the NhaA Na(+)/H(+) (TC 2.A.33) antiporter family.

It is found in the cell membrane. The catalysed reaction is Na(+)(in) + 2 H(+)(out) = Na(+)(out) + 2 H(+)(in). Na(+)/H(+) antiporter that extrudes sodium in exchange for external protons. This chain is Na(+)/H(+) antiporter NhaA 2, found in Mycolicibacterium gilvum (strain PYR-GCK) (Mycobacterium gilvum (strain PYR-GCK)).